The primary structure comprises 330 residues: Beta-ketoacyl-[acyl-carrier-protein] synthase III (330 aa).

Active-site residues include Cys115 and His255. Positions 256 to 260 (QANFR) are ACP-binding. Asn285 is a catalytic residue.

The protein belongs to the thiolase-like superfamily. FabH family. In terms of assembly, homodimer.

Its subcellular location is the cytoplasm. It carries out the reaction malonyl-[ACP] + acetyl-CoA + H(+) = 3-oxobutanoyl-[ACP] + CO2 + CoA. It participates in lipid metabolism; fatty acid biosynthesis. Functionally, catalyzes the condensation reaction of fatty acid synthesis by the addition to an acyl acceptor of two carbons from malonyl-ACP. Catalyzes the first condensation reaction which initiates fatty acid synthesis and may therefore play a role in governing the total rate of fatty acid production. Possesses both acetoacetyl-ACP synthase and acetyl transacylase activities. Its substrate specificity determines the biosynthesis of branched-chain and/or straight-chain of fatty acids. The polypeptide is Beta-ketoacyl-[acyl-carrier-protein] synthase III (Helicobacter pylori (strain G27)).